Reading from the N-terminus, the 331-residue chain is Glyceraldehyde-3-phosphate dehydrogenase (331 aa).

NAD(+)-binding positions include 10-11 (RI), aspartate 31, lysine 75, and threonine 117. D-glyceraldehyde 3-phosphate-binding positions include 148–150 (SCT) and threonine 179. The active-site Nucleophile is cysteine 149. Asparagine 180 serves as a coordination point for NAD(+). Residues arginine 194, 207 to 208 (TG), and arginine 230 contribute to the D-glyceraldehyde 3-phosphate site. Residue asparagine 311 coordinates NAD(+).

It belongs to the glyceraldehyde-3-phosphate dehydrogenase family. In terms of assembly, homotetramer.

It localises to the cytoplasm. The enzyme catalyses D-glyceraldehyde 3-phosphate + phosphate + NAD(+) = (2R)-3-phospho-glyceroyl phosphate + NADH + H(+). Its pathway is carbohydrate degradation; glycolysis; pyruvate from D-glyceraldehyde 3-phosphate: step 1/5. In terms of biological role, catalyzes the oxidative phosphorylation of glyceraldehyde 3-phosphate (G3P) to 1,3-bisphosphoglycerate (BPG) using the cofactor NAD. The first reaction step involves the formation of a hemiacetal intermediate between G3P and a cysteine residue, and this hemiacetal intermediate is then oxidized to a thioester, with concomitant reduction of NAD to NADH. The reduced NADH is then exchanged with the second NAD, and the thioester is attacked by a nucleophilic inorganic phosphate to produce BPG. This is Glyceraldehyde-3-phosphate dehydrogenase (gap) from Thermus aquaticus.